A 266-amino-acid polypeptide reads, in one-letter code: 2-hydroxyisocaproyl-CoA dehydratase activator (266 aa).

ATP-binding positions include 10 to 14 (STASK) and 102 to 104 (GQD). [4Fe-4S] cluster is bound at residue Cys-125. Asp-134 serves as a coordination point for ATP. Cys-164 lines the [4Fe-4S] cluster pocket. Positions 215 and 241 each coordinate ATP.

The protein belongs to the HadI activator family. Homodimer. [4Fe-4S] cluster serves as cofactor.

Functionally, involved in the reductive branch of L-leucine fermentation. Required for the activation of (R)-2-hydroxyisocaproyl-CoA dehydratase. The reduced activator transfers one electron to the dehydratase concomitant with hydrolysis of ATP. This protein is extremely sensitive towards oxygen. The protein is 2-hydroxyisocaproyl-CoA dehydratase activator of Clostridioides difficile (Peptoclostridium difficile).